We begin with the raw amino-acid sequence, 97 residues long: Large ribosomal subunit protein uL23 (97 aa).

This sequence belongs to the universal ribosomal protein uL23 family. As to quaternary structure, part of the 50S ribosomal subunit. Contacts protein L29, and trigger factor when it is bound to the ribosome.

In terms of biological role, one of the early assembly proteins it binds 23S rRNA. One of the proteins that surrounds the polypeptide exit tunnel on the outside of the ribosome. Forms the main docking site for trigger factor binding to the ribosome. The polypeptide is Large ribosomal subunit protein uL23 (Brucella anthropi (strain ATCC 49188 / DSM 6882 / CCUG 24695 / JCM 21032 / LMG 3331 / NBRC 15819 / NCTC 12168 / Alc 37) (Ochrobactrum anthropi)).